We begin with the raw amino-acid sequence, 207 residues long: Outer-membrane lipoprotein carrier protein (207 aa).

Positions 1–21 (MRAIRMLLVSALAMGAVSAHA) are cleaved as a signal peptide.

The protein belongs to the LolA family. In terms of assembly, monomer.

Its subcellular location is the periplasm. Functionally, participates in the translocation of lipoproteins from the inner membrane to the outer membrane. Only forms a complex with a lipoprotein if the residue after the N-terminal Cys is not an aspartate (The Asp acts as a targeting signal to indicate that the lipoprotein should stay in the inner membrane). The sequence is that of Outer-membrane lipoprotein carrier protein from Pseudomonas entomophila (strain L48).